The sequence spans 383 residues: Chaperone protein DnaJ (383 aa).

The J domain maps to 6–70 (DYYDVLGVGR…QKRAAYDQYG (65 aa)). The segment at 140–222 (GKETKISYSR…CHGTGREEER (83 aa)) adopts a CR-type zinc-finger fold. Cys-153, Cys-156, Cys-170, Cys-173, Cys-196, Cys-199, Cys-210, and Cys-213 together coordinate Zn(2+). 4 CXXCXGXG motif repeats span residues 153–160 (CHTCHGSG), 170–177 (CHKCHGAG), 196–203 (CDVCGGTG), and 210–217 (CDTCHGTG).

Belongs to the DnaJ family. As to quaternary structure, homodimer. Zn(2+) serves as cofactor.

Its subcellular location is the cytoplasm. In terms of biological role, participates actively in the response to hyperosmotic and heat shock by preventing the aggregation of stress-denatured proteins and by disaggregating proteins, also in an autonomous, DnaK-independent fashion. Unfolded proteins bind initially to DnaJ; upon interaction with the DnaJ-bound protein, DnaK hydrolyzes its bound ATP, resulting in the formation of a stable complex. GrpE releases ADP from DnaK; ATP binding to DnaK triggers the release of the substrate protein, thus completing the reaction cycle. Several rounds of ATP-dependent interactions between DnaJ, DnaK and GrpE are required for fully efficient folding. Also involved, together with DnaK and GrpE, in the DNA replication of plasmids through activation of initiation proteins. This is Chaperone protein DnaJ from Latilactobacillus sakei subsp. sakei (strain 23K) (Lactobacillus sakei subsp. sakei).